Here is a 289-residue protein sequence, read N- to C-terminus: 4-hydroxy-tetrahydrodipicolinate synthase (289 aa).

Threonine 45 contributes to the pyruvate binding site. Residue tyrosine 133 is the Proton donor/acceptor of the active site. Lysine 161 serves as the catalytic Schiff-base intermediate with substrate. Residue isoleucine 200 participates in pyruvate binding.

This sequence belongs to the DapA family. As to quaternary structure, homotetramer; dimer of dimers.

It localises to the cytoplasm. It carries out the reaction L-aspartate 4-semialdehyde + pyruvate = (2S,4S)-4-hydroxy-2,3,4,5-tetrahydrodipicolinate + H2O + H(+). It participates in amino-acid biosynthesis; L-lysine biosynthesis via DAP pathway; (S)-tetrahydrodipicolinate from L-aspartate: step 3/4. Functionally, catalyzes the condensation of (S)-aspartate-beta-semialdehyde [(S)-ASA] and pyruvate to 4-hydroxy-tetrahydrodipicolinate (HTPA). The sequence is that of 4-hydroxy-tetrahydrodipicolinate synthase from Coxiella burnetii (strain Dugway 5J108-111).